The primary structure comprises 203 residues: Large ribosomal subunit protein uL13 (203 aa).

The residue at position 2 (A2) is an N-acetylalanine. Position 59 is a citrulline (R59). S77 is modified (phosphoserine). R140 carries the citrulline modification. The residue at position 191 (K191) is an N6-acetyllysine.

Belongs to the universal ribosomal protein uL13 family. In terms of assembly, component of the 60S ribosome. Component of the GAIT complex. Interacts with EIF4G1. Phosphorylation at Ser-77 upon interferon-gamma treatment in macrophages involves a DAPK1-DAPK3 kinase cascade and is causing release from the ribosome, association with the GAIT complex and subsequent involvement in transcript-selective translation inhibition. In terms of processing, citrullinated by PADI4.

The protein resides in the cytoplasm. Functionally, associated with ribosomes but is not required for canonical ribosome function and has extra-ribosomal functions. Component of the GAIT (gamma interferon-activated inhibitor of translation) complex which mediates interferon-gamma-induced transcript-selective translation inhibition in inflammation processes. Upon interferon-gamma activation and subsequent phosphorylation dissociates from the ribosome and assembles into the GAIT complex which binds to stem loop-containing GAIT elements in the 3'-UTR of diverse inflammatory mRNAs (such as ceruplasmin) and suppresses their translation. In the GAIT complex interacts with m7G cap-bound eIF4G at or near the eIF3-binding site and blocks the recruitment of the 43S ribosomal complex. Involved in methylation of rRNA. The chain is Large ribosomal subunit protein uL13 (Rpl13a) from Rattus norvegicus (Rat).